A 350-amino-acid chain; its full sequence is Inhibin beta E chain (350 aa).

Positions 1-21 are cleaved as a signal peptide; the sequence is MGLSNVQLWTILLWALAWVQS. Residues 22–236 constitute a propeptide that is removed on maturation; the sequence is TRSACPSCGA…EPGAGRARRR (215 aa). Asn198 carries an N-linked (GlcNAc...) asparagine glycan. Disulfide bonds link Cys240–Cys248, Cys247–Cys315, Cys276–Cys347, and Cys280–Cys349.

Belongs to the TGF-beta family. Homodimeric or heterodimeric through association with alpha and beta subunits, linked by one or more disulfide bonds. Inhibins are heterodimers of one alpha and one beta subunit. Activins are homo- or heterodimers of beta subunits only.

The protein resides in the secreted. Functionally, inhibins and activins inhibit and activate, respectively, the secretion of follitropin by the pituitary gland. Inhibins/activins are involved in regulating a number of diverse functions such as hypothalamic and pituitary hormone secretion, gonadal hormone secretion, germ cell development and maturation, erythroid differentiation, insulin secretion, nerve cell survival, embryonic axial development or bone growth, depending on their subunit composition. Inhibins appear to oppose the functions of activins. Its function is as follows. Activin E is a homodimer of INHBE secreted by the liver that plays a crucial role in regulating metabolic homeostasis particularly in lipid metabolism and energy homeostasis. Plays a central role in the regulation of adipose tissue lipolysis by preventing the influx of fatty acids from adipose tissue into the liver. Mechanistically, signals via ACVR1C to activate SMAD2/3 signaling, suppressing PPARG target genes in adipose tissue, thereby reducing liver lipid content and improving glycemic control. Induces beige adipocyte formation and thermogenesis in response to cold exposure. The chain is Inhibin beta E chain (Inhbe) from Rattus norvegicus (Rat).